The chain runs to 265 residues: Tryptophan synthase alpha chain (265 aa).

Active-site proton acceptor residues include E45 and D56.

Belongs to the TrpA family. As to quaternary structure, tetramer of two alpha and two beta chains.

It carries out the reaction (1S,2R)-1-C-(indol-3-yl)glycerol 3-phosphate + L-serine = D-glyceraldehyde 3-phosphate + L-tryptophan + H2O. The protein operates within amino-acid biosynthesis; L-tryptophan biosynthesis; L-tryptophan from chorismate: step 5/5. The alpha subunit is responsible for the aldol cleavage of indoleglycerol phosphate to indole and glyceraldehyde 3-phosphate. The protein is Tryptophan synthase alpha chain of Halalkalibacterium halodurans (strain ATCC BAA-125 / DSM 18197 / FERM 7344 / JCM 9153 / C-125) (Bacillus halodurans).